Reading from the N-terminus, the 2961-residue chain is Zinc finger ZZ-type and EF-hand domain-containing protein 1 (2961 aa).

A disordered region spans residues 1–41 (MGNAPSHSSEDEAAAAGGEGWGPHQDWAAVSGTTPGPGVAA). Gly-2 is lipidated: N-myristoyl glycine. The 36-residue stretch at 111 to 146 (CSSEQFEEAFAQFDAEGDGTVDAENMLEALKNSSGA) folds into the EF-hand domain. One can recognise a DOC domain in the interval 226–405 (LVQKEKESPG…AIWYWSLLTS (180 aa)). Phosphoserine is present on residues Ser-240, Ser-1475, Ser-1488, and Ser-1509. Residues 1446-1531 (TADETSHLQP…PTRRPPFTRG (86 aa)) are disordered. Over residues 1485–1502 (GDQSPGLGTQPKLPSSSG) the composition is skewed to polar residues. Thr-1512 is subject to Phosphothreonine. The segment covering 1516–1531 (PLSPSTPTRRPPFTRG) has biased composition (low complexity). Ser-1518 is subject to Phosphoserine. 2 positions are modified to phosphothreonine: Thr-1521 and Thr-1523. Phosphoserine occurs at positions 1537 and 1540. ZZ-type zinc fingers lie at residues 1778–1833 (NVDI…FTCD) and 1827–1882 (NMEF…MVTI). Zn(2+)-binding residues include Cys-1783, Cys-1786, Cys-1797, Cys-1800, Cys-1806, Cys-1809, His-1819, His-1823, Cys-1832, Cys-1835, Cys-1846, Cys-1849, Cys-1855, Cys-1858, His-1868, and His-1872. 2 disordered regions span residues 1994 to 2078 (AVQG…PSPE) and 2426 to 2455 (LELDERGDREEEVERPVSSPGDPEQKKLDP). A compositionally biased stretch (basic and acidic residues) spans 2009-2027 (AVHEEIRPVDFKQRNKADK). Polar residues predominate over residues 2033-2043 (KDPSCQTQISD). Residues 2426–2440 (LELDERGDREEEVER) show a composition bias toward basic and acidic residues. Residue Ser-2444 is modified to Phosphoserine. Lys-2667 is subject to N6-acetyllysine.

In terms of assembly, interacts with KLF6 and KLF9. Interacts via (ZZ-type 2 zinc finger) with histone H3 trimethylated at 'Lys-4' (H3K4me3) and histone H3 acetylated at 'Lys-4' (H3K4ac). In terms of tissue distribution, expressed at low levels in cerebellum.

Histone H3 reader which may act as a transcriptional coactivator for KLF6 and KLF9 transcription factors. The protein is Zinc finger ZZ-type and EF-hand domain-containing protein 1 of Homo sapiens (Human).